A 337-amino-acid chain; its full sequence is MNARVEHRGRLDEREVAAVLTVVEAATEADGVRPLNEHVMLHLRYGGDERAGAVLLYVGDDLAGYAHVDPTDPVEGPSGELVIHPAFRGQGHGRHLLEAVLDRTGGRLRLWAHGGHPGAEALALSTGFTKIRSLWQMRRSLFAAIPGFELPDGVRLRTFAPGSPDEEAWVALNAKAFAHHPEQGSWTLEDLKRREQEPWFDPAGFFLAERPTGSGDGDVADGGSTDGGPADSGSADGGAGEGGTGDGNRLIGFHWTKVHGDGGHGHEPIGEVYVVGVDPAEQGGGLGRSLTLAGLSHLRARGLAQVMLYVDESNTAAIRLYEKLGFTRWDVDVMYRK.

2 N-acetyltransferase domains span residues 11–151 (LDER…FELP) and 154–337 (VRLR…MYRK). Position 37 (Glu37) interacts with 1D-myo-inositol 2-(L-cysteinylamino)-2-deoxy-alpha-D-glucopyranoside. 81–83 (LVI) contributes to the acetyl-CoA binding site. Glu182 contributes to the 1D-myo-inositol 2-(L-cysteinylamino)-2-deoxy-alpha-D-glucopyranoside binding site. Residues 210-246 (RPTGSGDGDVADGGSTDGGPADSGSADGGAGEGGTGD) are disordered. Positions 221–234 (DGGSTDGGPADSGS) are enriched in low complexity. Over residues 235–246 (ADGGAGEGGTGD) the composition is skewed to gly residues. Lys257 and Glu271 together coordinate 1D-myo-inositol 2-(L-cysteinylamino)-2-deoxy-alpha-D-glucopyranoside. Residues 275–277 (VGV) and 282–288 (QGGGLGR) each bind acetyl-CoA. 1D-myo-inositol 2-(L-cysteinylamino)-2-deoxy-alpha-D-glucopyranoside is bound at residue Tyr309. 314-319 (NTAAIR) contacts acetyl-CoA.

It belongs to the acetyltransferase family. MshD subfamily. Monomer.

The catalysed reaction is 1D-myo-inositol 2-(L-cysteinylamino)-2-deoxy-alpha-D-glucopyranoside + acetyl-CoA = mycothiol + CoA + H(+). In terms of biological role, catalyzes the transfer of acetyl from acetyl-CoA to desacetylmycothiol (Cys-GlcN-Ins) to form mycothiol. In Streptosporangium roseum (strain ATCC 12428 / DSM 43021 / JCM 3005 / KCTC 9067 / NCIMB 10171 / NRRL 2505 / NI 9100), this protein is Mycothiol acetyltransferase.